Reading from the N-terminus, the 533-residue chain is Multicopy suppressor of sporulation protein msa1 (533 aa).

Residues 30 to 68 are disordered; it reads DIPPGSLSENDNSTTFIKPPLETASSSTPIPSSSSSGVL. Residues 36–45 show a composition bias toward polar residues; the sequence is LSENDNSTTF. The span at 54 to 68 shows a compositional bias: low complexity; that stretch reads SSSTPIPSSSSSGVL. An RRM 1 domain is found at 79–158; the sequence is ACLFVASLNS…RHIRIERAKV (80 aa). Residues 237 to 292 are disordered; it reads YKKKGSSPFSPPNAHSRRRKSQGKDQSNTPVIKAPAPIPFSVSSDPPSTMGRSNSA. Residues 277–292 are compositionally biased toward polar residues; sequence SVSSDPPSTMGRSNSA. Residues 365-441 enclose the RRM 2 domain; it reads YSIFVGQLDP…KPLRVEFRQL (77 aa).

Its subcellular location is the cytoplasm. Functionally, negative regulator of sexual differentiation. Acts by repressing the transcription of meiosis-inducing, ste11-regulated genes. The protein is Multicopy suppressor of sporulation protein msa1 (msa1) of Schizosaccharomyces pombe (strain 972 / ATCC 24843) (Fission yeast).